We begin with the raw amino-acid sequence, 277 residues long: Probable ABC transporter permease protein y4oR (277 aa).

A run of 7 helical transmembrane segments spans residues 15-35 (LWTL…TWMV), 79-99 (VVTI…AYAL), 109-129 (LLVA…VPVY), 140-160 (TYQA…IWLM), 189-209 (IMMP…FIAV), 213-233 (FLFA…AMLG), and 242-262 (WDAV…FAFI). In terms of domain architecture, ABC transmembrane type-1 spans 74-263 (IINSAVVTIV…TPVIAFAFIM (190 aa)).

The protein belongs to the binding-protein-dependent transport system permease family. MalFG subfamily.

Its subcellular location is the cell inner membrane. Functionally, probably part of the binding-protein-dependent transport system y4oPQRS. This system probably transports a sugar-like molecule. Probably responsible for the translocation of the substrate across the membrane. The chain is Probable ABC transporter permease protein y4oR from Sinorhizobium fredii (strain NBRC 101917 / NGR234).